The sequence spans 120 residues: NADH-quinone oxidoreductase subunit A (120 aa).

3 helical membrane-spanning segments follow: residues 10-30, 65-85, and 89-109; these read ILVFLGISLFIAVLALTMGWF, VAILFIIFDLETAFLFPWAVV, and IGWFGFWAMMVFLAILVVGFI.

It belongs to the complex I subunit 3 family. NDH-1 is composed of 14 different subunits. Subunits NuoA, H, J, K, L, M, N constitute the membrane sector of the complex.

The protein resides in the cell inner membrane. It carries out the reaction a quinone + NADH + 5 H(+)(in) = a quinol + NAD(+) + 4 H(+)(out). NDH-1 shuttles electrons from NADH, via FMN and iron-sulfur (Fe-S) centers, to quinones in the respiratory chain. The immediate electron acceptor for the enzyme in this species is believed to be ubiquinone. Couples the redox reaction to proton translocation (for every two electrons transferred, four hydrogen ions are translocated across the cytoplasmic membrane), and thus conserves the redox energy in a proton gradient. The polypeptide is NADH-quinone oxidoreductase subunit A (Coxiella burnetii (strain Dugway 5J108-111)).